Reading from the N-terminus, the 573-residue chain is Sulfate adenylyltransferase (573 aa).

The N-terminal stretch occupies residues 1–169 (MANPPHGGIL…VEAVNKLNHY (169 aa)). The segment at 170 to 394 (DYVGLRFTPA…LRESNPPRSK (225 aa)) is catalytic. Residue Gln197 coordinates sulfate. Residues 197 to 200 (QTRN) and 291 to 294 (GRDH) each bind ATP. Residues Thr198, Arg199, and Asn200 contribute to the active site. Arg199 contributes to the sulfate binding site. Ala295 is a binding site for sulfate. Leu333 provides a ligand contact to ATP. The segment at 395–573 (QGFTVFLTGY…LESQGFLEKA (179 aa)) is allosteric regulation domain; adenylyl-sulfate kinase-like. 3'-phosphoadenylyl sulfate contacts are provided by residues 434–437 (DTVR), Arg451, 477–478 (IA), and Arg515.

The protein in the N-terminal section; belongs to the sulfate adenylyltransferase family. In the C-terminal section; belongs to the APS kinase family. As to quaternary structure, homohexamer. Dimer of trimers.

It is found in the cytoplasm. The enzyme catalyses sulfate + ATP + H(+) = adenosine 5'-phosphosulfate + diphosphate. Its pathway is sulfur metabolism; hydrogen sulfide biosynthesis; sulfite from sulfate: step 1/3. Allosterically inhibited by 3'-phosphoadenosine 5'-phosphosulfate (PAPS). Its function is as follows. Catalyzes the first intracellular reaction of sulfate assimilation, forming adenosine-5'-phosphosulfate (APS) from inorganic sulfate and ATP. Plays an important role in sulfate activation as a component of the biosynthesis pathway of sulfur-containing amino acids. This is Sulfate adenylyltransferase from Coccidioides immitis (strain RS) (Valley fever fungus).